A 339-amino-acid polypeptide reads, in one-letter code: tRNA-specific 2-thiouridylase MnmA (339 aa).

Residues 8–15 (AMSGGVDS) and methionine 34 each bind ATP. The Nucleophile role is filled by cysteine 94. Residues cysteine 94 and cysteine 188 are joined by a disulfide bond. Glycine 118 provides a ligand contact to ATP. Positions 136–138 (KDQ) are interaction with tRNA. Cysteine 188 functions as the Cysteine persulfide intermediate in the catalytic mechanism. Residues 290–291 (RY) form an interaction with tRNA region.

It belongs to the MnmA/TRMU family.

Its subcellular location is the cytoplasm. The catalysed reaction is S-sulfanyl-L-cysteinyl-[protein] + uridine(34) in tRNA + AH2 + ATP = 2-thiouridine(34) in tRNA + L-cysteinyl-[protein] + A + AMP + diphosphate + H(+). Catalyzes the 2-thiolation of uridine at the wobble position (U34) of tRNA, leading to the formation of s(2)U34. The sequence is that of tRNA-specific 2-thiouridylase MnmA from Nitratiruptor sp. (strain SB155-2).